The primary structure comprises 211 residues: Histidine biosynthesis bifunctional protein HisIE (211 aa).

Residues 1–122 (MSFKTAEVSS…DPQEESQMVW (122 aa)) are phosphoribosyl-AMP cyclohydrolase. The tract at residues 123–211 (LHQLEQLLAA…VINKLKERHK (89 aa)) is phosphoribosyl-ATP pyrophosphohydrolase.

This sequence in the N-terminal section; belongs to the PRA-CH family. It in the C-terminal section; belongs to the PRA-PH family.

The protein localises to the cytoplasm. It carries out the reaction 1-(5-phospho-beta-D-ribosyl)-ATP + H2O = 1-(5-phospho-beta-D-ribosyl)-5'-AMP + diphosphate + H(+). It catalyses the reaction 1-(5-phospho-beta-D-ribosyl)-5'-AMP + H2O = 1-(5-phospho-beta-D-ribosyl)-5-[(5-phospho-beta-D-ribosylamino)methylideneamino]imidazole-4-carboxamide. It participates in amino-acid biosynthesis; L-histidine biosynthesis; L-histidine from 5-phospho-alpha-D-ribose 1-diphosphate: step 2/9. Its pathway is amino-acid biosynthesis; L-histidine biosynthesis; L-histidine from 5-phospho-alpha-D-ribose 1-diphosphate: step 3/9. This Vibrio vulnificus (strain CMCP6) protein is Histidine biosynthesis bifunctional protein HisIE.